A 581-amino-acid polypeptide reads, in one-letter code: Pyridine nucleotide-disulfide oxidoreductase domain-containing protein 2 (581 aa).

38 to 71 (VVIGAGHNGLVAAAYLQRLGVNTAVFERRHVIGG) contributes to the FAD binding site.

It belongs to the carotenoid/retinoid oxidoreductase family. As to quaternary structure, interacts with COX5B; this interaction may contribute to localize PYROXD2 to the inner face of the inner mitochondrial membrane.

It localises to the mitochondrion matrix. In terms of biological role, probable oxidoreductase that may play a role as regulator of mitochondrial function. This is Pyridine nucleotide-disulfide oxidoreductase domain-containing protein 2 from Mus musculus (Mouse).